Reading from the N-terminus, the 530-residue chain is Bifunctional purine biosynthesis protein PurH (530 aa).

In terms of domain architecture, MGS-like spans 1–148 (MNNARPIRRA…KNHKDVTIVV (148 aa)).

This sequence belongs to the PurH family.

The catalysed reaction is (6R)-10-formyltetrahydrofolate + 5-amino-1-(5-phospho-beta-D-ribosyl)imidazole-4-carboxamide = 5-formamido-1-(5-phospho-D-ribosyl)imidazole-4-carboxamide + (6S)-5,6,7,8-tetrahydrofolate. The enzyme catalyses IMP + H2O = 5-formamido-1-(5-phospho-D-ribosyl)imidazole-4-carboxamide. It participates in purine metabolism; IMP biosynthesis via de novo pathway; 5-formamido-1-(5-phospho-D-ribosyl)imidazole-4-carboxamide from 5-amino-1-(5-phospho-D-ribosyl)imidazole-4-carboxamide (10-formyl THF route): step 1/1. The protein operates within purine metabolism; IMP biosynthesis via de novo pathway; IMP from 5-formamido-1-(5-phospho-D-ribosyl)imidazole-4-carboxamide: step 1/1. In Vibrio atlanticus (strain LGP32) (Vibrio splendidus (strain Mel32)), this protein is Bifunctional purine biosynthesis protein PurH.